The chain runs to 312 residues: Very-long-chain 3-oxoacyl-CoA reductase (312 aa).

Residues 4 to 24 (ALPAAGFLYWVGASTVAYLAL) form a helical membrane-spanning segment. 50-79 (GEWAVVTGGTDGIGKSYAEELAKRGMKIVL) contributes to the NADP(+) binding site. 2 helical membrane-spanning segments follow: residues 182-202 (GAIL…LTIY) and 271-291 (GYPI…WLYF). Residue serine 189 coordinates substrate. Catalysis depends on tyrosine 202, which acts as the Proton acceptor. The Di-lysine motif motif lies at 308–312 (KMKMN).

Belongs to the short-chain dehydrogenases/reductases (SDR) family. 17-beta-HSD 3 subfamily.

The protein localises to the endoplasmic reticulum membrane. It catalyses the reaction a very-long-chain (3R)-3-hydroxyacyl-CoA + NADP(+) = a very-long-chain 3-oxoacyl-CoA + NADPH + H(+). The catalysed reaction is 17beta-estradiol + NAD(+) = estrone + NADH + H(+). The enzyme catalyses 17beta-estradiol + NADP(+) = estrone + NADPH + H(+). It carries out the reaction 3-oxooctadecanoyl-CoA + NADPH + H(+) = (3R)-hydroxyoctadecanoyl-CoA + NADP(+). It catalyses the reaction (7Z,10Z,13Z,16Z)-3-oxodocosatetraenoyl-CoA + NADPH + H(+) = (3R)-hydroxy-(7Z,10Z,13Z,16Z)-docosatetraenoyl-CoA + NADP(+). The catalysed reaction is 3-oxo-(7Z,10Z,13Z,16Z,19Z)-docosapentaenoyl-CoA + NADPH + H(+) = (3R)-hydroxy-(7Z,10Z,13Z,16Z,19Z)-docosapentaenoyl-CoA + NADP(+). The enzyme catalyses (8Z,11Z,14Z)-3-oxoeicosatrienoyl-CoA + NADPH + H(+) = (3R)-hydroxy-(8Z,11Z,14Z)-eicosatrienoyl-CoA + NADP(+). It participates in lipid metabolism; fatty acid biosynthesis. Its pathway is steroid biosynthesis; estrogen biosynthesis. In terms of biological role, catalyzes the second of the four reactions of the long-chain fatty acids elongation cycle. This endoplasmic reticulum-bound enzymatic process, allows the addition of two carbons to the chain of long- and very long-chain fatty acids/VLCFAs per cycle. This enzyme has a 3-ketoacyl-CoA reductase activity, reducing 3-ketoacyl-CoA to 3-hydroxyacyl-CoA, within each cycle of fatty acid elongation. Thereby, it may participate in the production of VLCFAs of different chain lengths that are involved in multiple biological processes as precursors of membrane lipids and lipid mediators. May also catalyze the transformation of estrone (E1) into estradiol (E2) and play a role in estrogen formation. This chain is Very-long-chain 3-oxoacyl-CoA reductase (HSD17B12), found in Bos taurus (Bovine).